An 84-amino-acid polypeptide reads, in one-letter code: NADH-ubiquinone oxidoreductase chain 4L (84 aa).

2 helical membrane passes run 19 to 39 (ITLL…LIHI) and 50 to 70 (IFSL…LSIL).

It belongs to the complex I subunit 4L family.

Its subcellular location is the mitochondrion membrane. The enzyme catalyses a ubiquinone + NADH + 5 H(+)(in) = a ubiquinol + NAD(+) + 4 H(+)(out). Core subunit of the mitochondrial membrane respiratory chain NADH dehydrogenase (Complex I) that is believed to belong to the minimal assembly required for catalysis. Complex I functions in the transfer of electrons from NADH to the respiratory chain. The immediate electron acceptor for the enzyme is believed to be ubiquinone. This chain is NADH-ubiquinone oxidoreductase chain 4L (NAD4L), found in Candida albicans (strain SC5314 / ATCC MYA-2876) (Yeast).